A 484-amino-acid chain; its full sequence is tRNA-2-methylthio-N(6)-dimethylallyladenosine synthase (484 aa).

Residues 29–149 enclose the MTTase N-terminal domain; the sequence is GVFHIHTLGC…LPKLLDQNRA (121 aa). [4Fe-4S] cluster-binding residues include cysteine 38, cysteine 78, cysteine 112, cysteine 186, cysteine 190, and cysteine 193. The region spanning 172-401 is the Radical SAM core domain; the sequence is RASRISSWVA…VALQEQITEE (230 aa). The 71-residue stretch at 404-474 folds into the TRAM domain; that stretch reads ATFEGRDVEV…RHNLLADPDV (71 aa).

Belongs to the methylthiotransferase family. MiaB subfamily. As to quaternary structure, monomer. Requires [4Fe-4S] cluster as cofactor.

It localises to the cytoplasm. The enzyme catalyses N(6)-dimethylallyladenosine(37) in tRNA + (sulfur carrier)-SH + AH2 + 2 S-adenosyl-L-methionine = 2-methylsulfanyl-N(6)-dimethylallyladenosine(37) in tRNA + (sulfur carrier)-H + 5'-deoxyadenosine + L-methionine + A + S-adenosyl-L-homocysteine + 2 H(+). Functionally, catalyzes the methylthiolation of N6-(dimethylallyl)adenosine (i(6)A), leading to the formation of 2-methylthio-N6-(dimethylallyl)adenosine (ms(2)i(6)A) at position 37 in tRNAs that read codons beginning with uridine. In Bifidobacterium longum subsp. infantis (strain ATCC 15697 / DSM 20088 / JCM 1222 / NCTC 11817 / S12), this protein is tRNA-2-methylthio-N(6)-dimethylallyladenosine synthase.